Here is a 249-residue protein sequence, read N- to C-terminus: Glucosamine-6-phosphate deaminase (249 aa).

Aspartate 67 acts as the Proton acceptor; for enolization step in catalysis. The active-site For ring-opening step is the asparagine 136. Residue histidine 138 is the Proton acceptor; for ring-opening step of the active site. Glutamate 143 functions as the For ring-opening step in the catalytic mechanism.

This sequence belongs to the glucosamine/galactosamine-6-phosphate isomerase family. NagB subfamily.

The enzyme catalyses alpha-D-glucosamine 6-phosphate + H2O = beta-D-fructose 6-phosphate + NH4(+). It functions in the pathway amino-sugar metabolism; N-acetylneuraminate degradation; D-fructose 6-phosphate from N-acetylneuraminate: step 5/5. Its function is as follows. Catalyzes the reversible isomerization-deamination of glucosamine 6-phosphate (GlcN6P) to form fructose 6-phosphate (Fru6P) and ammonium ion. The sequence is that of Glucosamine-6-phosphate deaminase from Clostridium botulinum (strain Alaska E43 / Type E3).